Reading from the N-terminus, the 83-residue chain is UPF0270 protein CGSHiEE_07180 (83 aa).

The protein belongs to the UPF0270 family.

In Haemophilus influenzae (strain PittEE), this protein is UPF0270 protein CGSHiEE_07180.